Here is a 190-residue protein sequence, read N- to C-terminus: TATA box-binding protein-like 1 (190 aa).

This sequence belongs to the TBP family. Binds TFIIA and TFIIB.

It localises to the cytoplasm. The protein localises to the nucleus. In terms of biological role, part of a specialized transcription system that mediates the transcription of most ribosomal proteins through the 5'-TCT-3' motif which is a core promoter element at these genes. Seems to also mediate the transcription of NF1. Does not bind the TATA box. In Pongo abelii (Sumatran orangutan), this protein is TATA box-binding protein-like 1 (TBPL1).